The sequence spans 233 residues: MPCRREEEEEAGEEAEGEEEEDDSFLLLQQSVTLGSSGEVDRLVAQIGETLQLDAAQDSPASPCAPPGVPLRAPGPLAAAVPADKARPPAVPLLLPPASAETVGPAPSGALRCALGDRGRVRGRAAPYCVAEVAAGPSALPGPCRRGWLRDAVTSRRLQQRRWTQAGARAGDDDPHRLLQQLVLSGNLIKEAVRRLQRAVAAVAATGPASAPGPGGGRSGPDRIALQPSGSLL.

The segment at 1–24 is disordered; that stretch reads MPCRREEEEEAGEEAEGEEEEDDS. The segment covering 7–24 has biased composition (acidic residues); sequence EEEEAGEEAEGEEEEDDS. Residues 174 to 196 are involved in GSK-3 binding; that stretch reads DPHRLLQQLVLSGNLIKEAVRRL. The interval 204–233 is disordered; the sequence is AATGPASAPGPGGGRSGPDRIALQPSGSLL.

Belongs to the GSK-3-binding protein family. Binds GSK-3 and prevents GSK-3-dependent phosphorylation.

Positively regulates the Wnt signaling pathway by stabilizing beta-catenin through the association with GSK-3. The protein is GSK-3-binding protein FRAT2 (FRAT2) of Homo sapiens (Human).